A 298-amino-acid chain; its full sequence is Acetylglutamate kinase (298 aa).

Residues 69-70 (GG), Arg91, and Asn191 each bind substrate.

Belongs to the acetylglutamate kinase family. ArgB subfamily.

The protein localises to the cytoplasm. The enzyme catalyses N-acetyl-L-glutamate + ATP = N-acetyl-L-glutamyl 5-phosphate + ADP. Its pathway is amino-acid biosynthesis; L-arginine biosynthesis; N(2)-acetyl-L-ornithine from L-glutamate: step 2/4. Functionally, catalyzes the ATP-dependent phosphorylation of N-acetyl-L-glutamate. The chain is Acetylglutamate kinase from Neisseria meningitidis serogroup A / serotype 4A (strain DSM 15465 / Z2491).